The chain runs to 87 residues: Conotoxin Ca6.2 (87 aa).

The first 19 residues, methionine 1 to glycine 19, serve as a signal peptide directing secretion. Positions glutamate 20–arginine 52 are excised as a propeptide. Cystine bridges form between cysteine 55–cysteine 64, cysteine 58–cysteine 70, and cysteine 63–cysteine 84.

The protein belongs to the conotoxin Q superfamily. As to expression, expressed by the venom duct.

It localises to the secreted. This chain is Conotoxin Ca6.2, found in Conus caracteristicus (Characteristic cone).